Consider the following 522-residue polypeptide: Putative glucosylceramidase 3 (522 aa).

The first 21 residues, 1-21 (MSRWKVVILCLLSFMFEIGHA), serve as a signal peptide directing secretion. The active-site Proton donor is Glu259. Residue Glu364 is the Nucleophile of the active site.

The protein belongs to the glycosyl hydrolase 30 family.

The catalysed reaction is a beta-D-glucosylceramide + H2O = an N-acyl-sphingoid base + D-glucose. It catalyses the reaction a beta-D-glucosyl-(1&lt;-&gt;1')-N-acylsphing-4-enine + H2O = an N-acylsphing-4-enine + D-glucose. It carries out the reaction an N-acyl-1-beta-D-glucosyl-15-methylhexadecasphing-4-enine + H2O = an N-acyl-15-methylhexadecasphing-4-enine + D-glucose. The protein operates within lipid metabolism; sphingolipid metabolism. Glucosylceramidase that catalyzes the hydrolysis of glucosylceramides into free ceramides and glucose. C.elegans contain specific sphingoid bases, which are unique or different in structure compared to the sphingoid bases found in other animals. Two examples of these distinctive compounds are: 15-methylhexadecasphinganine and 15-methylhexadecasphing-4-enine. This Caenorhabditis elegans protein is Putative glucosylceramidase 3.